Consider the following 104-residue polypeptide: Toxin-like protein 14 (104 aa).

A signal peptide spans 1–25 (MNTYNARLYIFSLALALVILKGTKC).

In terms of processing, contains 4 disulfide bonds. Expressed by the venom gland.

It localises to the secreted. This Urodacus yaschenkoi (Inland robust scorpion) protein is Toxin-like protein 14.